Consider the following 356-residue polypeptide: Phosphotriesterase-related protein (356 aa).

A divalent metal cation is bound by residues His-23, His-25, Glu-175, His-207, His-236, and Asp-304.

This sequence belongs to the metallo-dependent hydrolases superfamily. Phosphotriesterase family. The cofactor is a divalent metal cation.

The sequence is that of Phosphotriesterase-related protein from Aedes aegypti (Yellowfever mosquito).